The following is a 490-amino-acid chain: MINYLFTITTWLIIISYWFIIIIVTCRILSKRRAISSSAAWLLVIYIIPFIGICTWFLLEEPYLGTRKLKLIKSVWSKKNKHFNNLKSHNYIFENNNSEVARSLFKLCKYRQGISGIKFNKLKLLKNTKDVIKNLVRDIYLAKNTIEIVFYIWKPGGLADNVAIALIQSAKRGIKCRLMLDSAGSLEFFRSKWVDMMQQSGIQIVEALKINLLHFFFRRMDLRQHRKFILIDNYITYIGSMNLVDPYLFKKSLGIGQWIDLMTRIEGPISTTMGAIYSCDWEVETGQQISPKRVKNNLIIPTYPIKECTSIVQVIASGPGFTEDMIHQALLTAIYSAQQKLTMTTPYLVPSDDLLRAICTAAQRGVEVILIIPKSHDSLLVKWASRVFFSELLESGVKIYQFKKGLLHSKSVLVDKQLSLIGTVNLDMRSLWLNFEITLVIDDKNFGKSLAIIHNEYISHSSLLDPKLWKIRSYWKKIIEKLFYFLSPLL.

2 helical membrane-spanning segments follow: residues 4–24 (YLFT…IIIV) and 39–59 (AAWL…WFLL). PLD phosphodiesterase domains lie at 220-247 (MDLR…VDPY) and 403-430 (KKGL…DMRS). Residues His-225, Lys-227, Asp-232, His-408, Lys-410, and Asp-415 contribute to the active site.

The protein belongs to the phospholipase D family. Cardiolipin synthase subfamily. ClsA sub-subfamily.

It is found in the cell membrane. The catalysed reaction is 2 a 1,2-diacyl-sn-glycero-3-phospho-(1'-sn-glycerol) = a cardiolipin + glycerol. Its function is as follows. Catalyzes the reversible phosphatidyl group transfer from one phosphatidylglycerol molecule to another to form cardiolipin (CL) (diphosphatidylglycerol) and glycerol. The polypeptide is Cardiolipin synthase A (Buchnera aphidicola subsp. Baizongia pistaciae (strain Bp)).